Reading from the N-terminus, the 156-residue chain is Small ribosomal subunit protein uS7 (156 aa).

It belongs to the universal ribosomal protein uS7 family. In terms of assembly, part of the 30S ribosomal subunit. Contacts proteins S9 and S11.

One of the primary rRNA binding proteins, it binds directly to 16S rRNA where it nucleates assembly of the head domain of the 30S subunit. Is located at the subunit interface close to the decoding center, probably blocks exit of the E-site tRNA. The chain is Small ribosomal subunit protein uS7 from Dichelobacter nodosus (strain VCS1703A).